We begin with the raw amino-acid sequence, 243 residues long: NAD-dependent protein deacetylase (243 aa).

A Deacetylase sirtuin-type domain is found at M1–E243. The NAD(+) site is built by A24, F35, R36, Q105, I107, D108, and H123. F35 lines the nicotinamide pocket. Nicotinamide is bound by residues I107 and D108. The active-site Proton acceptor is H123. C131, C134, C151, and C154 together coordinate Zn(2+). The NAD(+) site is built by S192, S193, N215, and D232.

The protein belongs to the sirtuin family. Class U subfamily. It depends on Zn(2+) as a cofactor.

The protein localises to the cytoplasm. It carries out the reaction N(6)-acetyl-L-lysyl-[protein] + NAD(+) + H2O = 2''-O-acetyl-ADP-D-ribose + nicotinamide + L-lysyl-[protein]. Its function is as follows. NAD-dependent protein deacetylase which modulates the activities of several enzymes which are inactive in their acetylated form. The sequence is that of NAD-dependent protein deacetylase from Staphylococcus aureus (strain MRSA252).